Consider the following 119-residue polypeptide: Large ribosomal subunit protein uL18 (119 aa).

The protein belongs to the universal ribosomal protein uL18 family. As to quaternary structure, part of the 50S ribosomal subunit; part of the 5S rRNA/L5/L18/L25 subcomplex. Contacts the 5S and 23S rRNAs.

This is one of the proteins that bind and probably mediate the attachment of the 5S RNA into the large ribosomal subunit, where it forms part of the central protuberance. The chain is Large ribosomal subunit protein uL18 from Borrelia duttonii (strain Ly).